Reading from the N-terminus, the 493-residue chain is Chitobiosyldiphosphodolichol beta-mannosyltransferase (493 aa).

Over 1–71 the chain is Lumenal; it reads MNRVAVVVLG…PISMSNSFKK (71 aa). Residues 72-92 traverse the membrane as a helical segment; that stretch reads IPLISIFMWPLLAICKVLFQI. Residues 93 to 109 lie on the Cytoplasmic side of the membrane; that stretch reads IQLMYVLLVKVPSPLNT. Positions 110-130 form an intramembrane region, helical; it reads ILVQSPPAIPTIFVMQIVCWI. The Cytoplasmic portion of the chain corresponds to 131–493; the sequence is RGVHLVIDWH…SSSNSKSKKD (363 aa). Residues 462–493 are disordered; it reads FIPSSSSSSSSSSSSSSSSSSSSSSNSKSKKD. Positions 465-493 are enriched in low complexity; sequence SSSSSSSSSSSSSSSSSSSSSSNSKSKKD.

This sequence belongs to the glycosyltransferase group 1 family. Glycosyltransferase 33 subfamily.

Its subcellular location is the endoplasmic reticulum membrane. It catalyses the reaction an N,N'-diacetylchitobiosyl-diphospho-di-trans,poly-cis-dolichol + GDP-alpha-D-mannose = a beta-D-Man-(1-&gt;4)-beta-D-GlcNAc-(1-&gt;4)-alpha-D-GlcNAc-diphospho-di-trans,poly-cis-dolichol + GDP + H(+). It functions in the pathway protein modification; protein glycosylation. Functionally, participates in the formation of the lipid-linked precursor oligosaccharide for N-glycosylation. Involved in assembling the dolichol-pyrophosphate-GlcNAc(2)-Man(5) intermediate on the cytoplasmic surface of the ER. The polypeptide is Chitobiosyldiphosphodolichol beta-mannosyltransferase (alg1) (Dictyostelium discoideum (Social amoeba)).